The primary structure comprises 196 residues: Imidazole glycerol phosphate synthase subunit HisH (196 aa).

In terms of domain architecture, Glutamine amidotransferase type-1 spans 2 to 196 (NVVILDTGCA…AKLLKNFLEM (195 aa)). Cys77 functions as the Nucleophile in the catalytic mechanism. Active-site residues include His178 and Glu180.

In terms of assembly, heterodimer of HisH and HisF.

It localises to the cytoplasm. The catalysed reaction is 5-[(5-phospho-1-deoxy-D-ribulos-1-ylimino)methylamino]-1-(5-phospho-beta-D-ribosyl)imidazole-4-carboxamide + L-glutamine = D-erythro-1-(imidazol-4-yl)glycerol 3-phosphate + 5-amino-1-(5-phospho-beta-D-ribosyl)imidazole-4-carboxamide + L-glutamate + H(+). It carries out the reaction L-glutamine + H2O = L-glutamate + NH4(+). Its pathway is amino-acid biosynthesis; L-histidine biosynthesis; L-histidine from 5-phospho-alpha-D-ribose 1-diphosphate: step 5/9. IGPS catalyzes the conversion of PRFAR and glutamine to IGP, AICAR and glutamate. The HisH subunit catalyzes the hydrolysis of glutamine to glutamate and ammonia as part of the synthesis of IGP and AICAR. The resulting ammonia molecule is channeled to the active site of HisF. This chain is Imidazole glycerol phosphate synthase subunit HisH, found in Shigella flexneri.